The chain runs to 411 residues: Translation initiation factor 2 subunit gamma (411 aa).

Residues 9-203 (QAEVNIGMVG…AIEDFIPTPK (195 aa)) form the tr-type G domain. Positions 18–25 (GHVDHGKT) are G1. 4 residues coordinate Mg(2+): aspartate 21, threonine 25, glycine 46, and threonine 48. 21–26 (DHGKTT) serves as a coordination point for GTP. The interval 46-50 (GITIK) is G2. Zn(2+) contacts are provided by cysteine 61, cysteine 64, cysteine 73, and cysteine 76. Positions 90 to 93 (DAPG) are G3. GTP contacts are provided by residues 146–149 (NKIE) and 181–183 (SAL). The G4 stretch occupies residues 146-149 (NKIE). Residues 181–183 (SAL) form a G5 region.

The protein belongs to the TRAFAC class translation factor GTPase superfamily. Classic translation factor GTPase family. EIF2G subfamily. In terms of assembly, heterotrimer composed of an alpha, a beta and a gamma chain. The cofactor is Mg(2+).

The enzyme catalyses GTP + H2O = GDP + phosphate + H(+). EIF-2 functions in the early steps of protein synthesis by forming a ternary complex with GTP and initiator tRNA. This chain is Translation initiation factor 2 subunit gamma, found in Pyrococcus abyssi (strain GE5 / Orsay).